Here is a 578-residue protein sequence, read N- to C-terminus: Serine/threonine-protein kinase D6PKL3 (578 aa).

Residues 1 to 24 show a composition bias toward low complexity; sequence MDSSSSVVYVGSSSKSRNFQSKSK. Residues 1 to 64 form a disordered region; sequence MDSSSSVVYV…EVIESSVSSV (64 aa). Residues 25–34 show a composition bias toward polar residues; the sequence is GSITSFSIDS. A compositionally biased stretch (low complexity) spans 53–64; sequence SPEVIESSVSSV. Residues 182–516 form the Protein kinase domain; the sequence is FKLIKKLGGG…ATEIKQHPFF (335 aa). Residues 188-196 and Lys-211 contribute to the ATP site; that span reads LGGGDIGNV. Residue Asp-307 is the Proton acceptor of the active site. The tract at residues 325–426 is activation loop; it reads DFDLSLRCAV…VGTHEYLAPE (102 aa). Positions 575–578 match the PIF motif; sequence IDFF.

The protein belongs to the protein kinase superfamily. AGC Ser/Thr protein kinase family. Expressed predominantly in root tissue with lower levels found in leaf, stem, seed and flower.

It localises to the cell membrane. The catalysed reaction is L-seryl-[protein] + ATP = O-phospho-L-seryl-[protein] + ADP + H(+). It carries out the reaction L-threonyl-[protein] + ATP = O-phospho-L-threonyl-[protein] + ADP + H(+). Functionally, protein kinase that regulates the auxin transport activity of PIN auxin efflux facilitators by direct phosphorylation. D6PK-mediated PIN phosphorylation promotes auxin transport in the hypocotyl and this is a prerequisite for PHOT1-dependent hypocotyl bending. In Arabidopsis thaliana (Mouse-ear cress), this protein is Serine/threonine-protein kinase D6PKL3 (D6PKL3).